The primary structure comprises 475 residues: Adenylyl cyclase-associated protein 1 (475 aa).

Alanine 2 bears the N-acetylalanine mark. Tyrosine 31 carries the post-translational modification Phosphotyrosine. Phosphoserine is present on serine 34. Lysine 81 bears the N6-acetyllysine mark. Disordered stretches follow at residues 216-255 and 278-318; these read ELSG…ASRS and MKTH…TKKE. Residues 218–228 are compositionally biased toward low complexity; it reads SGLPSGPSAGS. The span at 229–242 shows a compositional bias: pro residues; it reads GPPPPPPGPPPPPV. Residues 243–255 show a composition bias toward low complexity; sequence STSSGSDESASRS. At lysine 287 the chain carries N6-methyllysine. Residues serine 290, serine 295, and serine 301 each carry the phosphoserine modification. Over residues 300-312 the composition is skewed to pro residues; it reads FSAPKPQTSPSPK. Threonine 307 is subject to Phosphothreonine. Residues serine 308 and serine 310 each carry the phosphoserine modification. Positions 313–453 constitute a C-CAP/cofactor C-like domain; the sequence is PATKKEPAVL…EGGDFNEFPV (141 aa). Residue lysine 348 forms a Glycyl lysine isopeptide (Lys-Gly) (interchain with G-Cter in SUMO1) linkage.

This sequence belongs to the CAP family. In terms of assembly, homodimer. Binds actin monomers.

Its subcellular location is the cell membrane. Functionally, directly regulates filament dynamics and has been implicated in a number of complex developmental and morphological processes, including mRNA localization and the establishment of cell polarity. This Macaca fascicularis (Crab-eating macaque) protein is Adenylyl cyclase-associated protein 1 (CAP1).